The following is a 295-amino-acid chain: UDP-N-acetylenolpyruvoylglucosamine reductase (295 aa).

In terms of domain architecture, FAD-binding PCMH-type spans 23-188; sequence KVGGPADFLA…ISAKFALKPG (166 aa). The active site involves R167. The active-site Proton donor is S217. Residue E287 is part of the active site.

This sequence belongs to the MurB family. It depends on FAD as a cofactor.

It is found in the cytoplasm. It carries out the reaction UDP-N-acetyl-alpha-D-muramate + NADP(+) = UDP-N-acetyl-3-O-(1-carboxyvinyl)-alpha-D-glucosamine + NADPH + H(+). Its pathway is cell wall biogenesis; peptidoglycan biosynthesis. In terms of biological role, cell wall formation. The protein is UDP-N-acetylenolpyruvoylglucosamine reductase of Streptococcus pyogenes serotype M28 (strain MGAS6180).